The primary structure comprises 139 residues: Transcription antitermination protein NusB (139 aa).

Belongs to the NusB family.

Functionally, involved in transcription antitermination. Required for transcription of ribosomal RNA (rRNA) genes. Binds specifically to the boxA antiterminator sequence of the ribosomal RNA (rrn) operons. The protein is Transcription antitermination protein NusB of Cronobacter sakazakii (strain ATCC BAA-894) (Enterobacter sakazakii).